A 113-amino-acid polypeptide reads, in one-letter code: Large ribosomal subunit protein eL31 (113 aa).

Belongs to the eukaryotic ribosomal protein eL31 family.

The chain is Large ribosomal subunit protein eL31 (RPL31) from Candida glabrata (strain ATCC 2001 / BCRC 20586 / JCM 3761 / NBRC 0622 / NRRL Y-65 / CBS 138) (Yeast).